Reading from the N-terminus, the 214-residue chain is Putative ankyrin repeat protein R844 (214 aa).

ANK repeat units lie at residues 41 to 70 (VEKNMIEHIVENGYLDVLKYIDSLKNQNKF), 81 to 110 (SLDKYLIMSCEFGHLEMTKYFVSQGANVKT), 111 to 140 (DNNMPLRLASQNGHIDTIKYLIENSVDVRA), 142 to 170 (NDCALRMASLFGHINVVKYLVDMGADVTS), and 172 to 200 (NNFAIIHTARSGRLELAKYLAEKGADIRA).

The chain is Putative ankyrin repeat protein R844 from Acanthamoeba polyphaga mimivirus (APMV).